Reading from the N-terminus, the 506-residue chain is 5'-3' exonuclease PLD4 (506 aa).

Residues Leu31–Leu51 form a helical membrane-spanning segment. Cys94 and Cys250 are disulfide-bonded. N-linked (GlcNAc...) asparagine glycans are attached at residues Asn150 and Asn171. In terms of domain architecture, PLD phosphodiesterase 1 spans Thr209–Ser236. The active-site Proton donor is the His214. Active-site residues include Lys216 and Asp221. Asn249, Asn281, Asn403, Asn417, and Asn427 each carry an N-linked (GlcNAc...) asparagine glycan. A disulfide bridge connects residues Cys379 and Cys502. The PLD phosphodiesterase 2 domain occupies Phe423–Tyr449. The active-site Nucleophile is the His428. A glycan (N-linked (GlcNAc...) asparagine) is linked at Asn444.

This sequence belongs to the phospholipase D family. As to quaternary structure, homodimer. Post-translationally, highly N-glycosylated. Expressed in plasmacytoid dendritic cells and monocytes (at protein level).

The protein resides in the endoplasmic reticulum membrane. Its subcellular location is the golgi apparatus. It is found in the trans-Golgi network membrane. It localises to the nucleus. The protein localises to the early endosome. The protein resides in the cytoplasmic vesicle. Its subcellular location is the phagosome. It is found in the lysosome. It carries out the reaction Exonucleolytic cleavage in the 5'- to 3'-direction to yield nucleoside 3'-phosphates.. The catalysed reaction is a 5'-end 5'-dephospho-ribonucleotidyl-ribonucleotide-RNA + H2O = a ribonucleoside 3'-phosphate + a 5'-end dephospho-ribonucleoside-RNA + H(+). The enzyme catalyses a ribonucleoside 3'-phosphate-2'-3'-cyclophospho-GMP + H2O = a ribonucleoside 3'-phosphate + 2',3'-cyclophospho-GMP + H(+). It catalyses the reaction a 5'-end 5'-dephospho-2'-deoxyribonucleotidyl-2'-deoxyribonucleotide in single-stranded DNA + H2O = a 5'-end dephospho-2'-deoxyribonucleoside in single-stranded DNA + a 2'-deoxyribonucleoside 3'-phosphate + H(+). It carries out the reaction a 5'-end 5'-phospho-2'-deoxyribonucleotide in single-stranded DNA + H2O = a 5'-end 5'-dephospho-2'-deoxyribonucleotide in single-stranded DNA + phosphate. The catalysed reaction is a 3-lyso-sn-glycero-1-phospho-(3'-acyl-1'-sn-glycerol) + a 1-acyl-sn-glycerol = a 3-acyl-sn-glycero-1-phospho-(3'-acyl-1'-sn-glycerol) + glycerol. The enzyme catalyses 3-lyso-sn-glycero-1-phospho-(3'-(9Z-octadecenoyl)-1'-sn-glycerol) + 1-(9Z-octadecenoyl)-sn-glycerol = 3-(9Z-octadecenoyl)-sn-glycero-1-phospho-(3'-(9Z-octadecenoyl)-1'-sn-glycerol) + glycerol. Its activity is regulated as follows. The exonuclease activity toward ssDNA substrate is Ca(2+) and Mg(2+)-independent, but it is inhibited by Fe(2+), Cu(2+) and to a lesser extent Zn(2+) ions. 5'-&gt;3' exonuclease that hydrolyzes the phosphodiester bond of single-stranded DNA (ssDNA) and RNA molecules to form nucleoside 3'-monophosphates and 5'-end 5'-hydroxy deoxyribonucleotide/ribonucleotide fragments. Partially redundant with PLD3, can cleave all four nucleotides displaying higher efficiency for ssDNA and RNA fragments initiated with uridine and guanosine residues and lower efficiency for cytidine-initiated substrates. As a result, it does not always degrade polynucleotides to the single nucleotide level, it can stall at specific sites sparing certain fragments from exonucleolytic degradation. Processes self and pathogenic ssDNA and RNA molecules that reach the endolysosomal compartment via phagocytosis or autophagy and may serve as 'danger' signals for recognition by innate immune receptors such as toll-like receptors (TLRs). Degrades mitochondrial CpG-rich ssDNA fragments to prevent TLR9 activation and autoinflammatory response, but it can cleave viral RNA to generate ligands for TLR7 activation and initiate antiviral immune responses. In plasmacytoid dendritic cells, it cooperates with endonuclease RNASET2 to release 2',3'-cyclic guanosine monophosphate (2',3'-cGMP), a potent stimulatory ligand for TLR7. Produces 2',3'-cGMPs and cytidine-rich RNA fragments that occupy TLR7 ligand-binding pockets and trigger a signaling-competent state. Can exert polynucleotide phosphatase activity toward 5'-phosphorylated ssDNA substrates although at a slow rate. Transphosphatidylase that catalyzes the exchange with R to S stereo-inversion of the glycerol moiety between (S,R)-lysophosphatidylglycerol (LPG) and monoacylglycerol (MAG) substrates to yield (S,S)-bis(monoacylglycero)phosphate (BMP). Can synthesize a variety of (S,S)-BMPs representing the main phospholipid constituent of lysosomal intralumenal vesicle (ILV) membranes that bind acid hydrolases for lipid degradation. Regulates the homeostasis and interorganellar communication of the endolysosomal system with an overall impact on cellular removal of dysfunctional organelles via autophagy as well as proper protein and lipid turnover. May play a role in myotube formation in response to ER stress. This chain is 5'-3' exonuclease PLD4, found in Homo sapiens (Human).